We begin with the raw amino-acid sequence, 435 residues long: Serine--tRNA ligase (435 aa).

238-240 is a binding site for L-serine; sequence TAE. 269-271 contributes to the ATP binding site; that stretch reads RKE. E292 contributes to the L-serine binding site. Residue 356-359 coordinates ATP; that stretch reads EISS. Residue S391 participates in L-serine binding.

Belongs to the class-II aminoacyl-tRNA synthetase family. Type-1 seryl-tRNA synthetase subfamily. As to quaternary structure, homodimer. The tRNA molecule binds across the dimer.

It localises to the cytoplasm. It carries out the reaction tRNA(Ser) + L-serine + ATP = L-seryl-tRNA(Ser) + AMP + diphosphate + H(+). It catalyses the reaction tRNA(Sec) + L-serine + ATP = L-seryl-tRNA(Sec) + AMP + diphosphate + H(+). Its pathway is aminoacyl-tRNA biosynthesis; selenocysteinyl-tRNA(Sec) biosynthesis; L-seryl-tRNA(Sec) from L-serine and tRNA(Sec): step 1/1. Its function is as follows. Catalyzes the attachment of serine to tRNA(Ser). Is also able to aminoacylate tRNA(Sec) with serine, to form the misacylated tRNA L-seryl-tRNA(Sec), which will be further converted into selenocysteinyl-tRNA(Sec). This chain is Serine--tRNA ligase, found in Leuconostoc mesenteroides subsp. mesenteroides (strain ATCC 8293 / DSM 20343 / BCRC 11652 / CCM 1803 / JCM 6124 / NCDO 523 / NBRC 100496 / NCIMB 8023 / NCTC 12954 / NRRL B-1118 / 37Y).